The sequence spans 288 residues: NAD(P)H-hydrate epimerase (288 aa).

Residues 1–47 (MSRLRALLGLGLLVAGSRVPRIKSQTIACRSGPTWWGPQRLNSGGRW) constitute a mitochondrion transit peptide. A Phosphoserine modification is found at serine 49. One can recognise a YjeF N-terminal domain in the interval 65–275 (AQAVDQELFN…ALEKKYQLNL (211 aa)). 119–123 (NNGGD) contacts (6S)-NADPHX. Asparagine 120 contributes to the K(+) binding site. Position 144 is an N6-succinyllysine (lysine 144). Aspartate 185 contacts K(+). (6S)-NADPHX is bound by residues 189–195 (GFSFKGD) and aspartate 218. Serine 221 is a K(+) binding site.

Belongs to the NnrE/AIBP family. Homodimer. Interacts with APOA1 and APOA2. K(+) is required as a cofactor. In terms of processing, undergoes physiological phosphorylation during sperm capacitation, downstream to PKA activation. Ubiquitously expressed, with highest levels in kidney, heart and liver. Present in cerebrospinal fluid and urine but not in serum from healthy patients. Present in serum of sepsis patients (at protein level).

Its subcellular location is the mitochondrion. The protein localises to the secreted. The catalysed reaction is (6R)-NADHX = (6S)-NADHX. It catalyses the reaction (6R)-NADPHX = (6S)-NADPHX. Its function is as follows. Catalyzes the epimerization of the S- and R-forms of NAD(P)HX, a damaged form of NAD(P)H that is a result of enzymatic or heat-dependent hydration. This is a prerequisite for the S-specific NAD(P)H-hydrate dehydratase to allow the repair of both epimers of NAD(P)HX. Accelerates cholesterol efflux from endothelial cells to high-density lipoprotein (HDL) and thereby regulates angiogenesis. The sequence is that of NAD(P)H-hydrate epimerase from Homo sapiens (Human).